We begin with the raw amino-acid sequence, 529 residues long: Peptide chain release factor 3 (529 aa).

The region spanning 11-280 (AKRRTFAIIS…GLVEWAPAPM (270 aa)) is the tr-type G domain. GTP contacts are provided by residues 20–27 (SHPDAGKT), 88–92 (DTPGH), and 142–145 (NKLD).

The protein belongs to the TRAFAC class translation factor GTPase superfamily. Classic translation factor GTPase family. PrfC subfamily.

Its subcellular location is the cytoplasm. Its function is as follows. Increases the formation of ribosomal termination complexes and stimulates activities of RF-1 and RF-2. It binds guanine nucleotides and has strong preference for UGA stop codons. It may interact directly with the ribosome. The stimulation of RF-1 and RF-2 is significantly reduced by GTP and GDP, but not by GMP. In Yersinia pseudotuberculosis serotype O:1b (strain IP 31758), this protein is Peptide chain release factor 3.